The following is a 48-amino-acid chain: Large ribosomal subunit protein bL34c (48 aa).

The segment at 18-48 (SGFRSRMATPQGRKTIRNRRKKGRKNLTLRR) is disordered. A compositionally biased stretch (basic residues) spans 31-48 (KTIRNRRKKGRKNLTLRR).

It belongs to the bacterial ribosomal protein bL34 family.

The protein localises to the plastid. It is found in the chloroplast. This is Large ribosomal subunit protein bL34c from Phaeodactylum tricornutum (strain CCAP 1055/1).